We begin with the raw amino-acid sequence, 89 residues long: Small ribosomal subunit protein uS15 (89 aa).

The protein belongs to the universal ribosomal protein uS15 family. Part of the 30S ribosomal subunit. Forms a bridge to the 50S subunit in the 70S ribosome, contacting the 23S rRNA.

Functionally, one of the primary rRNA binding proteins, it binds directly to 16S rRNA where it helps nucleate assembly of the platform of the 30S subunit by binding and bridging several RNA helices of the 16S rRNA. Forms an intersubunit bridge (bridge B4) with the 23S rRNA of the 50S subunit in the ribosome. The protein is Small ribosomal subunit protein uS15 of Crocosphaera subtropica (strain ATCC 51142 / BH68) (Cyanothece sp. (strain ATCC 51142)).